The following is a 132-amino-acid chain: Global transcriptional regulator Spx 2 (132 aa).

A disulfide bridge connects residues cysteine 10 and cysteine 13.

It belongs to the ArsC family. Spx subfamily. Interacts with the C-terminal domain of the alpha subunit of the RNAP.

It is found in the cytoplasm. Global transcriptional regulator that plays a key role in stress response and exerts either positive or negative regulation of genes. Acts by interacting with the C-terminal domain of the alpha subunit of the RNA polymerase (RNAP). This interaction can enhance binding of RNAP to the promoter region of target genes and stimulate their transcription, or block interaction of RNAP with activator. The protein is Global transcriptional regulator Spx 2 of Lactococcus lactis subsp. lactis (strain IL1403) (Streptococcus lactis).